Consider the following 302-residue polypeptide: Putative S-adenosyl-L-methionine-dependent methyltransferase MAV_2803 (302 aa).

S-adenosyl-L-methionine contacts are provided by residues Asp-129 and 158–159; that span reads DL.

Belongs to the UPF0677 family.

Exhibits S-adenosyl-L-methionine-dependent methyltransferase activity. This chain is Putative S-adenosyl-L-methionine-dependent methyltransferase MAV_2803, found in Mycobacterium avium (strain 104).